The sequence spans 90 residues: UPF0335 protein RPD_1405 (90 aa).

It belongs to the UPF0335 family.

This is UPF0335 protein RPD_1405 from Rhodopseudomonas palustris (strain BisB5).